We begin with the raw amino-acid sequence, 518 residues long: Homoserine O-acetyltransferase (518 aa).

In terms of domain architecture, AB hydrolase-1 spans 69 to 468 (NVMVICHALT…DSPEGHDAFL (400 aa)). Ser-182 is a catalytic residue. Residue Ser-182 is the Nucleophile of the active site. The disordered stretch occupies residues 267–365 (RFGRNIPDPS…PNSVSDPFRP (99 aa)). The segment covering 290 to 303 (PAEEHYDIHNEGFR) has biased composition (basic and acidic residues). A compositionally biased stretch (low complexity) spans 310–341 (RSSTTTSDAPPSPTRTSSTSSTDAITPASTTP). Active-site residues include Asp-435 and His-464.

Belongs to the AB hydrolase superfamily. MetX family.

The catalysed reaction is L-homoserine + acetyl-CoA = O-acetyl-L-homoserine + CoA. It participates in amino-acid biosynthesis; L-methionine biosynthesis via de novo pathway; O-acetyl-L-homoserine from L-homoserine: step 1/1. In terms of biological role, commits homoserine to the methionine biosynthesis pathway by catalyzing its O-acetylation. This Ascobolus immersus protein is Homoserine O-acetyltransferase (MET2).